A 287-amino-acid chain; its full sequence is ATP synthase gamma chain (287 aa).

The protein belongs to the ATPase gamma chain family. In terms of assembly, F-type ATPases have 2 components, CF(1) - the catalytic core - and CF(0) - the membrane proton channel. CF(1) has five subunits: alpha(3), beta(3), gamma(1), delta(1), epsilon(1). CF(0) has three main subunits: a, b and c.

It is found in the cell inner membrane. Produces ATP from ADP in the presence of a proton gradient across the membrane. The gamma chain is believed to be important in regulating ATPase activity and the flow of protons through the CF(0) complex. The chain is ATP synthase gamma chain from Ectopseudomonas mendocina (strain ymp) (Pseudomonas mendocina).